Here is a 361-residue protein sequence, read N- to C-terminus: UDP-3-O-acylglucosamine N-acyltransferase (361 aa).

The Proton acceptor role is filled by H253.

It belongs to the transferase hexapeptide repeat family. LpxD subfamily. In terms of assembly, homotrimer.

The catalysed reaction is a UDP-3-O-[(3R)-3-hydroxyacyl]-alpha-D-glucosamine + a (3R)-hydroxyacyl-[ACP] = a UDP-2-N,3-O-bis[(3R)-3-hydroxyacyl]-alpha-D-glucosamine + holo-[ACP] + H(+). The protein operates within bacterial outer membrane biogenesis; LPS lipid A biosynthesis. Catalyzes the N-acylation of UDP-3-O-acylglucosamine using 3-hydroxyacyl-ACP as the acyl donor. Is involved in the biosynthesis of lipid A, a phosphorylated glycolipid that anchors the lipopolysaccharide to the outer membrane of the cell. This is UDP-3-O-acylglucosamine N-acyltransferase from Burkholderia mallei (strain ATCC 23344).